We begin with the raw amino-acid sequence, 372 residues long: Ligninase B (372 aa).

The N-terminal stretch at 1 to 21 (MAFKQLFAAISLALSLSAANA) is a signal peptide. Residues 22 to 28 (AAVIEKR) constitute a propeptide that is removed on maturation. Cystine bridges form between Cys31–Cys43, Cys42–Cys313, Cys62–Cys148, and Cys277–Cys345. The active-site Proton acceptor is the His75. Residues Asp76, Gly94, Asp96, and Ser98 each coordinate Ca(2+). His204 is a binding site for heme b. Ca(2+)-binding residues include Ser205, Asp222, Thr224, Ile227, and Asp229. The N-linked (GlcNAc...) asparagine glycan is linked to Asn285. Residues 350–361 (FPTLTTLPGPET) show a composition bias toward low complexity. The segment at 350–372 (FPTLTTLPGPETSVQRIPPPPGA) is disordered.

Belongs to the peroxidase family. Ligninase subfamily. It depends on heme b as a cofactor. The cofactor is Ca(2+).

The catalysed reaction is 1-(3,4-dimethoxyphenyl)-2-(2-methoxyphenoxy)propane-1,3-diol + H2O2 = 3,4-dimethoxybenzaldehyde + guaiacol + glycolaldehyde + H2O. The enzyme catalyses 2 (3,4-dimethoxyphenyl)methanol + H2O2 = 2 (3,4-dimethoxyphenyl)methanol radical + 2 H2O. It participates in secondary metabolite metabolism; lignin degradation. In terms of biological role, depolymerization of lignin. Catalyzes the C(alpha)-C(beta) cleavage of the propyl side chains of lignin. In Phanerodontia chrysosporium (White-rot fungus), this protein is Ligninase B (LIPB).